The chain runs to 479 residues: Ribosomal RNA small subunit methyltransferase F (479 aa).

Residues 125 to 131, glutamate 149, aspartate 176, and aspartate 194 each bind S-adenosyl-L-methionine; that span reads AAAPGSK. The active-site Nucleophile is cysteine 247.

This sequence belongs to the class I-like SAM-binding methyltransferase superfamily. RsmB/NOP family.

Its subcellular location is the cytoplasm. It catalyses the reaction cytidine(1407) in 16S rRNA + S-adenosyl-L-methionine = 5-methylcytidine(1407) in 16S rRNA + S-adenosyl-L-homocysteine + H(+). Specifically methylates the cytosine at position 1407 (m5C1407) of 16S rRNA. The protein is Ribosomal RNA small subunit methyltransferase F of Escherichia coli O6:H1 (strain CFT073 / ATCC 700928 / UPEC).